The chain runs to 321 residues: NADH-ubiquinone oxidoreductase chain 1 (321 aa).

Transmembrane regions (helical) follow at residues 5–25, 74–94, 104–124, 151–171, 175–195, 227–247, 256–276, and 296–316; these read LVTL…AFLT, LLIL…APIP, LGLL…LWAG, GIIL…LLTI, YTWL…STLA, FFLA…ILFI, ELFL…FLWI, and FLPM…SISG.

The protein belongs to the complex I subunit 1 family.

Its subcellular location is the mitochondrion inner membrane. It carries out the reaction a ubiquinone + NADH + 5 H(+)(in) = a ubiquinol + NAD(+) + 4 H(+)(out). Its function is as follows. Core subunit of the mitochondrial membrane respiratory chain NADH dehydrogenase (Complex I) that is believed to belong to the minimal assembly required for catalysis. Complex I functions in the transfer of electrons from NADH to the respiratory chain. The immediate electron acceptor for the enzyme is believed to be ubiquinone. This is NADH-ubiquinone oxidoreductase chain 1 (MT-ND1) from Varanus baritji (Black-spotted ridge-tailed monitor).